The primary structure comprises 223 residues: Ribose-5-phosphate isomerase A (223 aa).

Substrate-binding positions include 32–35 (TGST), 83–86 (DGAD), and 96–99 (KGGG). Glutamate 105 functions as the Proton acceptor in the catalytic mechanism. Lysine 123 contacts substrate.

The protein belongs to the ribose 5-phosphate isomerase family. As to quaternary structure, homodimer.

It catalyses the reaction aldehydo-D-ribose 5-phosphate = D-ribulose 5-phosphate. It functions in the pathway carbohydrate degradation; pentose phosphate pathway; D-ribose 5-phosphate from D-ribulose 5-phosphate (non-oxidative stage): step 1/1. Catalyzes the reversible conversion of ribose-5-phosphate to ribulose 5-phosphate. The protein is Ribose-5-phosphate isomerase A of Acinetobacter baumannii (strain SDF).